Here is a 244-residue protein sequence, read N- to C-terminus: Uridylate kinase (244 aa).

Lysine 15–glycine 18 contributes to the ATP binding site. The tract at residues glycine 23–glycine 28 is involved in allosteric activation by GTP. A UMP-binding site is contributed by glycine 57. Positions 58 and 62 each coordinate ATP. UMP is bound by residues aspartate 77 and threonine 138–threonine 145. Residues threonine 165, phenylalanine 171, and aspartate 174 each contribute to the ATP site.

Belongs to the UMP kinase family. Homohexamer.

It localises to the cytoplasm. The enzyme catalyses UMP + ATP = UDP + ADP. It participates in pyrimidine metabolism; CTP biosynthesis via de novo pathway; UDP from UMP (UMPK route): step 1/1. Its activity is regulated as follows. Allosterically activated by GTP. Inhibited by UTP. In terms of biological role, catalyzes the reversible phosphorylation of UMP to UDP. The chain is Uridylate kinase from Aeromonas hydrophila subsp. hydrophila (strain ATCC 7966 / DSM 30187 / BCRC 13018 / CCUG 14551 / JCM 1027 / KCTC 2358 / NCIMB 9240 / NCTC 8049).